Here is a 147-residue protein sequence, read N- to C-terminus: Sentan (147 aa).

Residues Met-1–Lys-36 form a disordered region. The span at Thr-8–Pro-21 shows a compositional bias: basic and acidic residues. Low complexity predominate over residues Glu-23–Ser-32.

The protein belongs to the S-100 family. Expressed exclusively in ciliated epithelial cells. Detected in ciliated epithelium of trachea and oviduct (at protein level).

The protein localises to the cell projection. Its subcellular location is the cilium. Functionally, may be a component of the linker structure that bridges the ciliary membrane and peripheral singlet microtubules. This Mus musculus (Mouse) protein is Sentan (Sntn).